We begin with the raw amino-acid sequence, 136 residues long: Small ribosomal subunit protein uS8c (136 aa).

This sequence belongs to the universal ribosomal protein uS8 family. Part of the 30S ribosomal subunit.

Its subcellular location is the plastid. The protein localises to the chloroplast. One of the primary rRNA binding proteins, it binds directly to 16S rRNA central domain where it helps coordinate assembly of the platform of the 30S subunit. The sequence is that of Small ribosomal subunit protein uS8c (rps8) from Agrostis stolonifera (Creeping bentgrass).